A 151-amino-acid chain; its full sequence is Flagellar assembly factor FliW (151 aa).

The protein belongs to the FliW family. Interacts with translational regulator CsrA and flagellin(s).

It localises to the cytoplasm. Acts as an anti-CsrA protein, binds CsrA and prevents it from repressing translation of its target genes, one of which is flagellin. Binds to flagellin and participates in the assembly of the flagellum. This Lachnospira eligens (strain ATCC 27750 / DSM 3376 / VPI C15-48 / C15-B4) (Eubacterium eligens) protein is Flagellar assembly factor FliW.